Reading from the N-terminus, the 540-residue chain is Sterol O-acyltransferase 1 (540 aa).

Residues 1-20 form a disordered region; sequence MSLRNRLSKSGENPEQDEAQ. At 1–128 the chain is on the cytoplasmic side; sequence MSLRNRLSKS…LDELFEVDHI (128 aa). A Phosphoserine modification is found at S2. Position 127 (H127) interacts with cholesterol. Residues 129–150 form a helical membrane-spanning segment; it reads RTIYHMFIALLILFVLSTIVVD. Residues 151–170 lie on the Lumenal side of the membrane; the sequence is YIDEGRLVLEFNLLAYAFGK. A helical transmembrane segment spans residues 171 to 196; the sequence is FPTVIWTWWAMFLSTLSIPYFLFQRW. Residues 197–208 lie on the Cytoplasmic side of the membrane; that stretch reads AHGYSKSSHPLI. The helical transmembrane segment at 209–234 threads the bilayer; that stretch reads YSLVHGLLFLVFQLGVLGFVPTYVVL. The Lumenal portion of the chain corresponds to 235 to 242; the sequence is AYTLPPAS. Residues 243–266 form a helical membrane-spanning segment; sequence RFILILEQIRLIMKAHSFVRENIP. The Cytoplasmic segment spans residues 267 to 309; that stretch reads RVLNAAKEKSSKDPLPTVNQYLYFLFAPTLIYRDNYPRTPTVR. Residues 310-342 form a helical membrane-spanning segment; it reads WGYVAMQFLQVFGCLFYVYYIFERLCAPLFRNI. At 343 to 359 the chain is on the lumenal side; that stretch reads KQEPFSARVLVLCVFNS. The helical transmembrane segment at 360 to 385 threads the bilayer; it reads ILPGVLILFLSFFAFLHCWLNAFAEM. At 386–433 the chain is on the cytoplasmic side; the sequence is LRFGDRMFYKDWWNSTSYSNYYRTWNVVVHDWLYYYVYKDLLWFFSKR. An FYXDWWN motif motif is present at residues 393-399; sequence FYKDWWN. Residues N405, R408, N411, H415, Y423, K435, and S446 each contribute to the an acyl-CoA site. The chain crosses the membrane as a helical span at residues 434–458; it reads FKSAAMLAVFALSAVVHEYALAICL. Residue H450 is part of the active site. At 459-464 the chain is on the lumenal side; that stretch reads SYFYPV. The chain crosses the membrane as a helical span at residues 465 to 480; that stretch reads LFVLFMFFGMAFNFIV. The Cytoplasmic segment spans residues 481-486; sequence NDSRKR. A helical transmembrane segment spans residues 487–518; that stretch reads PIWNIMVWASLFLGYGLILCFYSQEWYARQHC. C518 and C536 are joined by a disulfide. Over 519 to 540 the chain is Lumenal; that stretch reads PLKNPTFLDYVRPRTWTCRYVF.

It belongs to the membrane-bound acyltransferase family. Sterol o-acyltransferase subfamily. May form homo- or heterodimers. Interacts with UBIAD1.

The protein resides in the endoplasmic reticulum membrane. It catalyses the reaction a sterol + a long-chain fatty acyl-CoA = a long-chain 3-hydroxysterol ester + CoA. It carries out the reaction cholesterol + an acyl-CoA = a cholesterol ester + CoA. The catalysed reaction is cholesterol + (9Z)-octadecenoyl-CoA = cholesteryl (9Z-octadecenoate) + CoA. The enzyme catalyses cholesterol + hexadecanoyl-CoA = cholesteryl hexadecanoate + CoA. It catalyses the reaction octadecanoyl-CoA + cholesterol = cholesteryl octadecanoate + CoA. It carries out the reaction (9Z,12Z)-octadecadienoyl-CoA + cholesterol = cholesteryl (9Z,12Z)-octadecadienoate + CoA. The catalysed reaction is (5Z,8Z,11Z,14Z)-eicosatetraenoyl-CoA + cholesterol = cholesteryl (5Z,8Z,11Z,14Z)-eicosatetraenoate + CoA. The enzyme catalyses (9Z)-hexadecenoyl-CoA + cholesterol = cholesteryl (9Z)-hexadecenoate + CoA. It catalyses the reaction (11Z)-octadecenoyl-CoA + cholesterol = cholesteryl (11Z)-octadecenoate + CoA. It carries out the reaction (7Z)-octadecenoyl-CoA + cholesterol = cholesteryl (7Z)-octadecenoate + CoA. Functionally, catalyzes the formation of fatty acid-cholesterol esters, which are less soluble in membranes than cholesterol. Plays a role in lipoprotein assembly and dietary cholesterol absorption. Preferentially utilizes oleoyl-CoA ((9Z)-octadecenoyl-CoA) as a substrate: shows a higher activity towards an acyl-CoA substrate with a double bond at the delta-9 position (9Z) than towards saturated acyl-CoA or an unsaturated acyl-CoA with a double bond at the delta-7 (7Z) or delta-11 (11Z) positions. This is Sterol O-acyltransferase 1 from Mus musculus (Mouse).